Here is an 86-residue protein sequence, read N- to C-terminus: Small ribosomal subunit protein bS16 (86 aa).

This sequence belongs to the bacterial ribosomal protein bS16 family.

This is Small ribosomal subunit protein bS16 from Methylacidiphilum infernorum (isolate V4) (Methylokorus infernorum (strain V4)).